A 464-amino-acid polypeptide reads, in one-letter code: 3-isopropylmalate dehydratase large subunit (464 aa).

Positions 337, 397, and 400 each coordinate [4Fe-4S] cluster.

It belongs to the aconitase/IPM isomerase family. LeuC type 1 subfamily. Heterodimer of LeuC and LeuD. [4Fe-4S] cluster is required as a cofactor.

The enzyme catalyses (2R,3S)-3-isopropylmalate = (2S)-2-isopropylmalate. Its pathway is amino-acid biosynthesis; L-leucine biosynthesis; L-leucine from 3-methyl-2-oxobutanoate: step 2/4. Catalyzes the isomerization between 2-isopropylmalate and 3-isopropylmalate, via the formation of 2-isopropylmaleate. The polypeptide is 3-isopropylmalate dehydratase large subunit (Bacillus thuringiensis (strain Al Hakam)).